Reading from the N-terminus, the 477-residue chain is Aspartyl/glutamyl-tRNA(Asn/Gln) amidotransferase subunit B (477 aa).

This sequence belongs to the GatB/GatE family. GatB subfamily. As to quaternary structure, heterotrimer of A, B and C subunits.

It catalyses the reaction L-glutamyl-tRNA(Gln) + L-glutamine + ATP + H2O = L-glutaminyl-tRNA(Gln) + L-glutamate + ADP + phosphate + H(+). The catalysed reaction is L-aspartyl-tRNA(Asn) + L-glutamine + ATP + H2O = L-asparaginyl-tRNA(Asn) + L-glutamate + ADP + phosphate + 2 H(+). Its function is as follows. Allows the formation of correctly charged Asn-tRNA(Asn) or Gln-tRNA(Gln) through the transamidation of misacylated Asp-tRNA(Asn) or Glu-tRNA(Gln) in organisms which lack either or both of asparaginyl-tRNA or glutaminyl-tRNA synthetases. The reaction takes place in the presence of glutamine and ATP through an activated phospho-Asp-tRNA(Asn) or phospho-Glu-tRNA(Gln). In Oenococcus oeni (strain ATCC BAA-331 / PSU-1), this protein is Aspartyl/glutamyl-tRNA(Asn/Gln) amidotransferase subunit B.